A 498-amino-acid polypeptide reads, in one-letter code: ATP synthase subunit beta, chloroplastic (498 aa).

Residue 172 to 179 coordinates ATP; the sequence is GGAGVGKT.

The protein belongs to the ATPase alpha/beta chains family. F-type ATPases have 2 components, CF(1) - the catalytic core - and CF(0) - the membrane proton channel. CF(1) has five subunits: alpha(3), beta(3), gamma(1), delta(1), epsilon(1). CF(0) has four main subunits: a(1), b(1), b'(1) and c(9-12).

It localises to the plastid. The protein localises to the chloroplast thylakoid membrane. It carries out the reaction ATP + H2O + 4 H(+)(in) = ADP + phosphate + 5 H(+)(out). Produces ATP from ADP in the presence of a proton gradient across the membrane. The catalytic sites are hosted primarily by the beta subunits. This chain is ATP synthase subunit beta, chloroplastic, found in Balaka seemannii.